A 589-amino-acid chain; its full sequence is Progranulin (589 aa).

Positions 1-17 (MWVLMSWLAFAAGLVAG) are cleaved as a signal peptide. Asn-38 carries an N-linked (GlcNAc...) asparagine glycan. Intrachain disulfides connect Cys-125-Cys-138 and Cys-132-Cys-148. The N-linked (GlcNAc...) asparagine glycan is linked to Asn-263. 10 disulfide bridges follow: Cys-282/Cys-294, Cys-288/Cys-304, Cys-295/Cys-312, Cys-305/Cys-319, Cys-313/Cys-326, Cys-320/Cys-333, Cys-364/Cys-376, Cys-370/Cys-386, Cys-395/Cys-408, and Cys-402/Cys-414. A glycan (N-linked (GlcNAc...) asparagine) is linked at Asn-373. Asn-526 carries N-linked (GlcNAc...) asparagine glycosylation.

This sequence belongs to the granulin family. As to quaternary structure, progranulin is secreted as a homodimer. Interacts with SLPI; interaction protects progranulin from proteolysis. Interacts (via region corresponding to granulin-7 peptide) with CTSD; stabilizes CTSD and increases its proteolytic activity. Interacts (via region corresponding to granulin-7 peptide) with SORT1; this interaction mediates endocytosis and lysosome delivery of progranulin; interaction occurs at the neuronal cell surface in a stressed nervous system. Interacts with PSAP; facilitates lysosomal delivery of progranulin from the extracellular space and the biosynthetic pathway. Forms a complex with PSAP and M6PR; PSAP bridges the binding between progranulin and M6PR. Forms a complex with PSAP and SORT1; progranulin bridges the interaction between PSAP and SORT1; facilitates lysosomal targeting of PSAP via SORT1; interaction enhances PSAP uptake in primary cortical neurons. Interacts (via regions corresponding to granulin-2 and granulin-7 peptides) with GBA1; this interaction prevents aggregation of GBA1-SCARB2 complex via interaction with HSPA1A upon stress. Interacts (via region corresponding to granulin-7 peptide) with HSPA1A; mediates recruitment of HSPA1A to GBA1 and prevents GBA1 aggregation in response to stress. Post-translationally, N-glycosylated. Cleaved by ELANE; proteolysis is blocked by SLPI and is concentration- and time-dependent and induces CXCL8/IL-8 production; granulin-3 and granulin-4 are resistant to ELANE. Cleaved by CTSL in lysosome thus regulating the maturation and turnover of progranulin within the lysosome. As to expression, highly expressed at the wound site and diminishes away from the wound. Not expressed in fibroblasts and endothelial cells in intact skin. In adult brain, expressed primarily in neurons and in resting and reactive microglia. Expressed in both neurons and microglia. Highly expressed in activated microglia in response to injury. Expressed in macrophage.

The protein localises to the secreted. It localises to the lysosome. In terms of biological role, secreted protein that acts as a key regulator of lysosomal function and as a growth factor involved in inflammation, wound healing and cell proliferation. Regulates protein trafficking to lysosomes, and also the activity of lysosomal enzymes. Also facilitates the acidification of lysosomes, causing degradation of mature CTSD by CTSB. In addition, functions as a wound-related growth factor that acts directly on dermal fibroblasts and endothelial cells to promote division, migration and the formation of capillary-like tubule structures. Also promotes epithelial cell proliferation by blocking TNF-mediated neutrophil activation preventing release of oxidants and proteases. Moreover, modulates inflammation in neurons by preserving neurons survival, axonal outgrowth and neuronal integrity. Inhibits epithelial cell proliferation and induces epithelial cells to secrete IL-8. Functionally, stabilizes CTSD through interaction with CTSD leading to maintain its aspartic-type peptidase activity. This Mus musculus (Mouse) protein is Progranulin (Grn).